The chain runs to 419 residues: Histone acetyltransferase type B catalytic subunit (419 aa).

N-acetylalanine is present on alanine 2. N6-acetyllysine occurs at positions 9 and 15. The interval 62–64 (DDE) is interaction with histone H4 N-terminus. Serine 190 bears the Phosphoserine; by AMPK mark. The segment at 225 to 227 (YNY) is interaction with histone H4 N-terminus. Acetyl-CoA is bound by residues 241–243 (MLI) and 248–254 (QGQGHGA). Catalysis depends on glutamate 276, which acts as the Proton donor/acceptor. The residue at position 343 (serine 343) is a Phosphoserine.

This sequence belongs to the HAT1 family. In terms of assembly, catalytic subunit of the type B histone acetyltransferase (HAT) complex, composed of RBBP7 and HAT1. Interacts with histones H4 and H2A. The interaction is dependent of the ability of RBBP7 to bind to the N-terminus of histones. Component of the histone H3.1 and H3.3 complexes. In terms of processing, phosphorylated by AMPK at Ser-190; phosphorylation increases HAT1 activity.

The protein resides in the nucleus matrix. Its subcellular location is the mitochondrion. It localises to the cytoplasm. The protein localises to the nucleus. It is found in the nucleoplasm. The enzyme catalyses L-lysyl-[protein] + acetyl-CoA = N(6)-acetyl-L-lysyl-[protein] + CoA + H(+). Histone acetyltransferase that plays a role in different biological processes including cell cycle progression, glucose metabolism, histone production or DNA damage repair. Coordinates histone production and acetylation via H4 promoter binding. Acetylates histone H4 at 'Lys-5' (H4K5ac) and 'Lys-12' (H4K12ac) and, to a lesser extent, histone H2A at 'Lys-5' (H2AK5ac). Drives H4 production by chromatin binding to support chromatin replication and acetylation. Since transcription of H4 genes is tightly coupled to S-phase, plays an important role in S-phase entry and progression. Promotes homologous recombination in DNA repair by facilitating histone turnover and incorporation of acetylated H3.3 at sites of double-strand breaks. In addition, acetylates other substrates such as chromatin-related proteins. Also acetylates RSAD2 which mediates the interaction of ubiquitin ligase UBE4A with RSAD2 leading to RSAD2 ubiquitination and subsequent degradation. In terms of biological role, (Microbial infection) Contributes to hepatitis B virus (HBV) replication by acetylating histone H4 at the sites of 'Lys-5' and 'Lys-12' on the covalently closed circular DNA (cccDNA) minichromosome leading to its accumulation within the host cell. The polypeptide is Histone acetyltransferase type B catalytic subunit (HAT1) (Homo sapiens (Human)).